Reading from the N-terminus, the 156-residue chain is Snaclec A6 (156 aa).

The first 23 residues, 1-23, serve as a signal peptide directing secretion; that stretch reads MGRSISVSFGLLVVFLSLSGTGA. 3 disulfide bridges follow: Cys27–Cys38, Cys55–Cys154, and Cys129–Cys146. Residues 34-155 form the C-type lectin domain; sequence HEGHCYKVFN…CGKPYRFTCE (122 aa).

The protein belongs to the snaclec family. As to quaternary structure, heterodimer; disulfide-linked. Expressed by the venom gland.

It is found in the secreted. Its function is as follows. Interferes with one step of hemostasis (modulation of platelet aggregation, or coagulation cascade, for example). This chain is Snaclec A6, found in Macrovipera lebetinus (Levantine viper).